Reading from the N-terminus, the 182-residue chain is uncharacterized protein (182 aa).

2 disordered regions span residues 1-73 (MMSG…YRSL) and 105-182 (SMST…HLNR). Low complexity-rich tracts occupy residues 43 to 68 (RPSP…ETSS) and 105 to 121 (SMST…SPVT). Residues 122-131 (APAPPPPPTS) show a composition bias toward pro residues.

This is an uncharacterized protein from Caenorhabditis elegans.